We begin with the raw amino-acid sequence, 291 residues long: uncharacterized protein (291 aa).

3 disordered regions span residues 1–62 (MELR…SSKK), 220–242 (PLPA…TDKV), and 255–291 (ENNK…SRKK). Positions 18–41 (EPAKNKSERSIESNERVGTREAKS) are enriched in basic and acidic residues. Composition is skewed to polar residues over residues 42 to 58 (ENTS…ATTD) and 226 to 236 (PSLNLSPQKVP). S267 is modified (phosphoserine).

It localises to the cytoplasm. The protein localises to the nucleus. This is an uncharacterized protein from Saccharomyces cerevisiae (strain ATCC 204508 / S288c) (Baker's yeast).